A 269-amino-acid polypeptide reads, in one-letter code: MPELPEVEVSRLGVSPHLIGNTITRVVVRERRMRWPIPQEVAKVEGQKVTAVKRRAKYLLIETAQGTLILHLGMSGKLRVIDASTPVIKHDHVDIVLSTGKCLRFNDPRRFGAVLYQAPDTHIPMLDNLGPEPLTDDFDDTRLFTLSRNRKGPVKNFIMDNAIVVGVGNIYANEALFLAGIDPRRAAGNISAARYKSLTATIKQVLAKAIEQGGTTLKDFAQTDGKPGYFAQHLNVYGRKGEPCEACGKAIESKVIGQRNTFFCTRCQR.

Catalysis depends on Pro-2, which acts as the Schiff-base intermediate with DNA. Residue Glu-3 is the Proton donor of the active site. Lys-57 functions as the Proton donor; for beta-elimination activity in the catalytic mechanism. DNA-binding residues include His-90, Arg-109, and Arg-150. Residues 235–269 form an FPG-type zinc finger; sequence NVYGRKGEPCEACGKAIESKVIGQRNTFFCTRCQR. The active-site Proton donor; for delta-elimination activity is the Arg-259.

This sequence belongs to the FPG family. As to quaternary structure, monomer. Zn(2+) serves as cofactor.

It catalyses the reaction Hydrolysis of DNA containing ring-opened 7-methylguanine residues, releasing 2,6-diamino-4-hydroxy-5-(N-methyl)formamidopyrimidine.. The catalysed reaction is 2'-deoxyribonucleotide-(2'-deoxyribose 5'-phosphate)-2'-deoxyribonucleotide-DNA = a 3'-end 2'-deoxyribonucleotide-(2,3-dehydro-2,3-deoxyribose 5'-phosphate)-DNA + a 5'-end 5'-phospho-2'-deoxyribonucleoside-DNA + H(+). Its function is as follows. Involved in base excision repair of DNA damaged by oxidation or by mutagenic agents. Acts as a DNA glycosylase that recognizes and removes damaged bases. Has a preference for oxidized purines, such as 7,8-dihydro-8-oxoguanine (8-oxoG). Has AP (apurinic/apyrimidinic) lyase activity and introduces nicks in the DNA strand. Cleaves the DNA backbone by beta-delta elimination to generate a single-strand break at the site of the removed base with both 3'- and 5'-phosphates. The polypeptide is Formamidopyrimidine-DNA glycosylase (Alteromonas mediterranea (strain DSM 17117 / CIP 110805 / LMG 28347 / Deep ecotype)).